The chain runs to 385 residues: Cytochrome b (385 aa).

The next 4 helical transmembrane spans lie at 32–52, 76–98, 113–133, and 179–199; these read FGSL…TLAM, WLVR…LHIG, TWAI…LGYV, and FFAL…MHLI. Histidine 82 and histidine 96 together coordinate heme b. Residues histidine 183 and histidine 197 each contribute to the heme b site. Histidine 202 contacts a ubiquinone. 4 consecutive transmembrane segments (helical) span residues 226-246, 290-310, 322-342, and 349-369; these read FIFK…IFVF, LLGV…PITD, LSKV…QIGA, and FIEL…VIVP.

Belongs to the cytochrome b family. As to quaternary structure, fungal cytochrome b-c1 complex contains 10 subunits; 3 respiratory subunits, 2 core proteins and 5 low-molecular weight proteins. Cytochrome b-c1 complex is a homodimer. Requires heme b as cofactor.

The protein localises to the mitochondrion inner membrane. Functionally, component of the ubiquinol-cytochrome c reductase complex (complex III or cytochrome b-c1 complex) that is part of the mitochondrial respiratory chain. The b-c1 complex mediates electron transfer from ubiquinol to cytochrome c. Contributes to the generation of a proton gradient across the mitochondrial membrane that is then used for ATP synthesis. The protein is Cytochrome b (cob) of Aspergillus tubingensis.